Consider the following 199-residue polypeptide: Peroxynitrite isomerase (199 aa).

The GXWXGXG motif lies at 21 to 27; that stretch reads GEWEGRG. Residue H190 participates in heme b binding.

The protein belongs to the nitrobindin family. Homodimer. The cofactor is heme b.

It carries out the reaction peroxynitrite = nitrate. Its pathway is nitrogen metabolism. In terms of biological role, heme-binding protein able to scavenge peroxynitrite and to protect free L-tyrosine against peroxynitrite-mediated nitration, by acting as a peroxynitrite isomerase that converts peroxynitrite to nitrate. Therefore, this protein likely plays a role in peroxynitrite sensing and in the detoxification of reactive nitrogen and oxygen species (RNS and ROS, respectively). Is able to bind nitric oxide (NO) in vitro, but may act as a sensor of peroxynitrite levels in vivo. The polypeptide is Peroxynitrite isomerase (Paenarthrobacter aurescens (strain TC1)).